Consider the following 528-residue polypeptide: Protein MGF 505-7R (528 aa).

5 ANK repeats span residues 54–83 (SIND…NLHY), 129–158 (GCDL…LLNV), 261–290 (SVKR…IPRG), 292–321 (IERL…YKVK), and 322–352 (NVKK…LLDA).

This sequence belongs to the asfivirus MGF 505 family. In terms of assembly, interacts with host STING1. Interacts with host JAK1; this interaction leads to JAK1 degradation. Interacts with host JAK2; this interaction leads to JAK2 degradation. Interacts with host RELA; this interaction inhibits NF-kappa-B promoter activity.

The protein localises to the host cytoplasm. In terms of biological role, plays a role in virus cell tropism, and may be required for efficient virus replication in macrophages. Interferes with host NF-kappa-B promoter activity mediated by TLR8. Mechanistically, inhibits the phosphorylation and subsequent nuclear translocation of host NF-kappa-B RELA subunit downstream of TLR8. Promotes the expression of the autophagy-related protein host ULK1 to degrade host STING and inhibit the interferon response. Inhibits also JAK1- and JAK2-mediated signaling and thus negatively regulates the IFN-gamma signaling. The sequence is that of Protein MGF 505-7R from African swine fever virus (strain Badajoz 1971 Vero-adapted) (Ba71V).